A 780-amino-acid polypeptide reads, in one-letter code: ATP-dependent 6-phosphofructokinase, muscle type (780 aa).

Thr2 is subject to N-acetylthreonine. The tract at residues 2–390 is N-terminal catalytic PFK domain 1; sequence THEEHHATKT…NWEVYKLLAH (389 aa). ATP is bound by residues Gly25, 88–89, and 118–121; these read RC and GDGS. Asp119 contacts Mg(2+). A Phosphoserine modification is found at Ser133. Residues 164-166, Arg201, 208-210, Glu264, Arg292, and 298-301 contribute to the substrate site; these read SID, MGR, and HVQR. Asp166 acts as the Proton acceptor in catalysis. Phosphoserine is present on Ser377. Residues 391–401 form an interdomain linker region; that stretch reads VRPPVSKSGSH. The tract at residues 402-780 is C-terminal regulatory PFK domain 2; sequence TVAVMNVGAP…TRKRSGEAAV (379 aa). Beta-D-fructose 2,6-bisphosphate contacts are provided by residues Arg471 and 528–532; that span reads TVSNN. A glycan (O-linked (GlcNAc) serine) is linked at Ser530. The residue at position 557 (Lys557) is an N6-(2-hydroxyisobutyryl)lysine. Beta-D-fructose 2,6-bisphosphate-binding positions include Arg566, 573–575, Glu629, Arg655, and 661–664; these read MGG and HMQQ. Residue Ser667 is modified to Phosphoserine. Arg735 contacts beta-D-fructose 2,6-bisphosphate. Ser775 bears the Phosphoserine mark.

The protein belongs to the phosphofructokinase type A (PFKA) family. ATP-dependent PFK group I subfamily. Eukaryotic two domain clade 'E' sub-subfamily. As to quaternary structure, homo- and heterotetramers. Phosphofructokinase (PFK) enzyme functions as a tetramer composed of different combinations of 3 types of subunits, called PFKM (M), PFKL (L) and PFKP (P). The composition of the PFK tetramer differs according to the tissue type it is present in. The kinetic and regulatory properties of the tetrameric enzyme are dependent on the subunit composition, hence can vary across tissues. Interacts (via C-terminus) with HK1 (via N-terminal spermatogenic cell-specific region). Mg(2+) is required as a cofactor. GlcNAcylation decreases enzyme activity.

Its subcellular location is the cytoplasm. The catalysed reaction is beta-D-fructose 6-phosphate + ATP = beta-D-fructose 1,6-bisphosphate + ADP + H(+). It functions in the pathway carbohydrate degradation; glycolysis; D-glyceraldehyde 3-phosphate and glycerone phosphate from D-glucose: step 3/4. With respect to regulation, allosterically activated by ADP, AMP, or fructose 2,6-bisphosphate, and allosterically inhibited by ATP or citrate. Its function is as follows. Catalyzes the phosphorylation of D-fructose 6-phosphate to fructose 1,6-bisphosphate by ATP, the first committing step of glycolysis. This chain is ATP-dependent 6-phosphofructokinase, muscle type (PFKM), found in Pongo abelii (Sumatran orangutan).